We begin with the raw amino-acid sequence, 263 residues long: 3-methyl-2-oxobutanoate hydroxymethyltransferase (263 aa).

Asp45 and Asp84 together coordinate Mg(2+). Residues Asp45 to Ser46, Asp84, and Lys112 contribute to the 3-methyl-2-oxobutanoate site. Mg(2+) is bound at residue Glu114. Glu180 serves as the catalytic Proton acceptor.

This sequence belongs to the PanB family. In terms of assembly, homodecamer; pentamer of dimers. Requires Mg(2+) as cofactor.

It localises to the cytoplasm. It carries out the reaction 3-methyl-2-oxobutanoate + (6R)-5,10-methylene-5,6,7,8-tetrahydrofolate + H2O = 2-dehydropantoate + (6S)-5,6,7,8-tetrahydrofolate. It participates in cofactor biosynthesis; (R)-pantothenate biosynthesis; (R)-pantoate from 3-methyl-2-oxobutanoate: step 1/2. Functionally, catalyzes the reversible reaction in which hydroxymethyl group from 5,10-methylenetetrahydrofolate is transferred onto alpha-ketoisovalerate to form ketopantoate. The chain is 3-methyl-2-oxobutanoate hydroxymethyltransferase from Salmonella arizonae (strain ATCC BAA-731 / CDC346-86 / RSK2980).